The chain runs to 964 residues: Glycine dehydrogenase (decarboxylating) (964 aa).

Positions 1-11 are enriched in polar residues; that stretch reads MNSTLQNQTKT. The tract at residues 1 to 21 is disordered; the sequence is MNSTLQNQTKTNLEKVGTDPL. N6-(pyridoxal phosphate)lysine is present on lysine 713.

It belongs to the GcvP family. In terms of assembly, the glycine cleavage system is composed of four proteins: P, T, L and H. Requires pyridoxal 5'-phosphate as cofactor.

It carries out the reaction N(6)-[(R)-lipoyl]-L-lysyl-[glycine-cleavage complex H protein] + glycine + H(+) = N(6)-[(R)-S(8)-aminomethyldihydrolipoyl]-L-lysyl-[glycine-cleavage complex H protein] + CO2. The glycine cleavage system catalyzes the degradation of glycine. The P protein binds the alpha-amino group of glycine through its pyridoxal phosphate cofactor; CO(2) is released and the remaining methylamine moiety is then transferred to the lipoamide cofactor of the H protein. The chain is Glycine dehydrogenase (decarboxylating) from Leptospira interrogans serogroup Icterohaemorrhagiae serovar Lai (strain 56601).